Consider the following 394-residue polypeptide: Putative gustatory receptor 22a (394 aa).

Over 1 to 16 (MSQPKRIHRICKGLAR) the chain is Cytoplasmic. The chain crosses the membrane as a helical span at residues 17–37 (FTIRATLYGSWVLGLFPFTFD). Topologically, residues 38–47 (SRKRRLNRSK) are extracellular. N44 carries N-linked (GlcNAc...) asparagine glycosylation. Residues 48–68 (WLLAYGLVLNLTLLVLSMLPS) traverse the membrane as a helical segment. The Cytoplasmic portion of the chain corresponds to 69 to 148 (TDDHNSVKVE…HTFNRYVIEK (80 aa)). A helical transmembrane segment spans residues 149–169 (GLVIILEIGSSLVLYFGIPNS). A topological domain (extracellular) is located at residue K170. A helical membrane pass occupies residues 171–191 (IVVYEAVCIYIVQLEVLMVVM). The Cytoplasmic segment spans residues 192–256 (HFHLAVIYIY…TAIYDIQVTL (65 aa)). A helical transmembrane segment spans residues 257 to 277 (FMATLFSVNIIVGHVLVICWI). N-linked (GlcNAc...) asparagine glycosylation occurs at N278. Residues 278–281 (NITR) lie on the Extracellular side of the membrane. The chain crosses the membrane as a helical span at residues 282–302 (FSLLVIFLLFPQALIINFWDL). Over 303–361 (WQGIAFCDLAESTGKKTSMILKLFNDMENMDQETERRVTEFTLFCSHRRLKVCHLGLLD) the chain is Cytoplasmic. Residues 362 to 382 (INYEMGFRMIITNILYVVFLV) form a helical membrane-spanning segment. Topologically, residues 383-394 (QFDYMNLKFKTD) are extracellular.

Belongs to the insect chemoreceptor superfamily. Gustatory receptor (GR) family. Gr22e subfamily. As to expression, expressed in neurons of the terminal external chemosensory organ of larvae.

Its subcellular location is the cell membrane. Functionally, probable gustatory receptor which mediates acceptance or avoidance behavior, depending on its substrates. This chain is Putative gustatory receptor 22a (Gr22a), found in Drosophila melanogaster (Fruit fly).